The chain runs to 174 residues: Repair DNA polymerase X (174 aa).

The tract at residues 42 to 51 (REEKMLNDVD) is involved in ssDNA binding. Mg(2+)-binding residues include Asp49 and Asp51. Cys81 and Cys86 are oxidised to a cystine. Asp100 lines the Mg(2+) pocket.

This sequence belongs to the DNA polymerase type-X family. Requires Mg(2+) as cofactor.

The protein resides in the virion. The enzyme catalyses DNA(n) + a 2'-deoxyribonucleoside 5'-triphosphate = DNA(n+1) + diphosphate. Its function is as follows. Error-prone polymerase lacking a proofreading 3'-5' exonuclease which catalyzes the gap-filling reaction during the DNA repair process. Specifically binds intermediates in the single-nucleotide base-excision repair process. Also catalyzes DNA polymerization with low nucleotide-insertion fidelity. Probably acts as a strategic DNA mutase, which gives rise to a rapid emergence of variants. Generates mismatched G-G pairs, in that case, the polymerase first binds the deoxynucleotide followed by mismatch formation. Together with the viral DNA ligase, fills the single nucleotide gaps generated by the AP endonuclease. Binds DNA with high affinity via the helix alphaE. This chain is Repair DNA polymerase X, found in Ornithodoros (relapsing fever ticks).